The primary structure comprises 176 residues: Deoxyuridine 5'-triphosphate nucleotidohydrolase (176 aa).

Residues 67–69 (RSG), Asn80, 84–86 (TVD), and Lys94 each bind substrate. Positions 141–176 (GGFGSTGGHASVDGAEGGITHGGNSYASVVSDREGQ) are disordered.

Belongs to the dUTPase family. Requires Mg(2+) as cofactor.

It catalyses the reaction dUTP + H2O = dUMP + diphosphate + H(+). It functions in the pathway pyrimidine metabolism; dUMP biosynthesis; dUMP from dCTP (dUTP route): step 2/2. This enzyme is involved in nucleotide metabolism: it produces dUMP, the immediate precursor of thymidine nucleotides and it decreases the intracellular concentration of dUTP so that uracil cannot be incorporated into DNA. The polypeptide is Deoxyuridine 5'-triphosphate nucleotidohydrolase (Streptomyces griseus subsp. griseus (strain JCM 4626 / CBS 651.72 / NBRC 13350 / KCC S-0626 / ISP 5235)).